The sequence spans 146 residues: Hemoglobin subunit beta (146 aa).

An N-acetylvaline modification is found at valine 1. A Globin domain is found at 2–146 (QLSGEEKAAV…VANALAHKYH (145 aa)). Serine 44 carries the phosphoserine modification. Lysine 59 bears the N6-acetyllysine mark. Heme b is bound at residue histidine 63. Position 82 is an N6-acetyllysine (lysine 82). Histidine 92 contributes to the heme b binding site. At cysteine 93 the chain carries S-nitrosocysteine. Position 144 is an N6-acetyllysine (lysine 144).

Belongs to the globin family. Heterotetramer of two alpha chains and two beta chains. As to expression, red blood cells.

Involved in oxygen transport from the lung to the various peripheral tissues. The sequence is that of Hemoglobin subunit beta (HBB) from Equus hemionus kulan (Turkmenian kulan).